A 900-amino-acid polypeptide reads, in one-letter code: Zinc finger protein 574 (900 aa).

C2H2-type zinc fingers lie at residues Y16–H38, Y76–H98, and Y126–H148. A Phosphoserine modification is found at S164. The segment at Y213–H235 adopts a C2H2-type 4 zinc-finger fold. Low complexity predominate over residues A244–V254. The disordered stretch occupies residues A244 to G306. Positions H273–D290 are enriched in basic and acidic residues. Residue S301 is modified to Phosphoserine. C2H2-type zinc fingers lie at residues L312–H334, F339–H361, F367–H389, H395–H416, Y469–H492, H498–H520, F526–H548, Y554–H576, Y582–H604, and Y610–H633. The C2H2-type 15; degenerate zinc-finger motif lies at Y639–A662. A C2H2-type 16 zinc finger spans residues F670 to H692. Residues A690–G741 form a disordered region. Position 721 is a phosphoserine (S721). Positions S721 to P736 are enriched in low complexity. T728 is subject to Phosphothreonine. 4 consecutive C2H2-type zinc fingers follow at residues P742–H764, Y770–H792, F798–H820, and Y826–H848. At R836 the chain carries Asymmetric dimethylarginine.

Belongs to the krueppel C2H2-type zinc-finger protein family.

Its subcellular location is the nucleus. In terms of biological role, may be involved in transcriptional regulation. The sequence is that of Zinc finger protein 574 (Znf574) from Mus musculus (Mouse).